Consider the following 428-residue polypeptide: Serine--tRNA ligase (428 aa).

An L-serine-binding site is contributed by 235 to 237; it reads TAE. Residue 266–268 coordinates ATP; the sequence is RYE. E289 contacts L-serine. An ATP-binding site is contributed by 353 to 356; sequence EVSS. Residue S389 coordinates L-serine.

This sequence belongs to the class-II aminoacyl-tRNA synthetase family. Type-1 seryl-tRNA synthetase subfamily. Homodimer. The tRNA molecule binds across the dimer.

The protein resides in the cytoplasm. The enzyme catalyses tRNA(Ser) + L-serine + ATP = L-seryl-tRNA(Ser) + AMP + diphosphate + H(+). The catalysed reaction is tRNA(Sec) + L-serine + ATP = L-seryl-tRNA(Sec) + AMP + diphosphate + H(+). The protein operates within aminoacyl-tRNA biosynthesis; selenocysteinyl-tRNA(Sec) biosynthesis; L-seryl-tRNA(Sec) from L-serine and tRNA(Sec): step 1/1. In terms of biological role, catalyzes the attachment of serine to tRNA(Ser). Is also able to aminoacylate tRNA(Sec) with serine, to form the misacylated tRNA L-seryl-tRNA(Sec), which will be further converted into selenocysteinyl-tRNA(Sec). The polypeptide is Serine--tRNA ligase (Blochmanniella pennsylvanica (strain BPEN)).